The primary structure comprises 450 residues: Endosomal transmembrane epsin interactor 1 (450 aa).

Residues 1–29 (MILLVNLFVLLSVVCVLLNLAGFILGCQG) form the signal peptide. Residues 30–85 (AQFVSSVPRCDLVDLGEGKICFCCEEFQPAKCTDKENALKLFPVQPCSAVHLLLKK) lie on the Lumenal side of the membrane. Residues 86–106 (VLFALCALNALTTTVCLVAAA) form a helical membrane-spanning segment. At 107-450 (LRYLQIFATR…LIGVIRETVL (344 aa)) the chain is on the cytoplasmic side. The tract at residues 107-450 (LRYLQIFATR…LIGVIRETVL (344 aa)) is mediates interaction with EPN1. 2 short sequence motifs (PPxY; mediates interaction with ITCH) span residues 148-151 (PPSY) and 194-197 (PPPY). A disordered region spans residues 235-284 (DGDIPNIPAEENASTSTPSSTLVRPIRSRRALPPLRTRSKSDPVLHPSEE). The segment covering 246-256 (NASTSTPSSTL) has biased composition (polar residues). Residues 273 to 284 (SKSDPVLHPSEE) are compositionally biased toward basic and acidic residues. Lys274 participates in a covalent cross-link: Glycyl lysine isopeptide (Lys-Gly) (interchain with G-Cter in ubiquitin). At Ser275 the chain carries Phosphoserine. Residues Lys329 and Lys365 each participate in a glycyl lysine isopeptide (Lys-Gly) (interchain with G-Cter in ubiquitin) cross-link.

Belongs to the ENTREP family. In terms of assembly, interacts with ITCH; enhances the ubiquitination of CXCR4 by ITCH and the subsequent endocytosis and desensitization of the receptor. Interacts with EPN1. In terms of processing, monoubiquitinated at Lys-274, Lys-329 and Lys-365 by ITCH. In terms of tissue distribution, prominently expressed in muscle.

The protein resides in the early endosome membrane. Its subcellular location is the late endosome membrane. It localises to the recycling endosome membrane. It is found in the cell membrane. Functions as an activator of the E3 ubiquitin protein ligase ITCH in the ubiquitination of the CXCL12-activated CXCR4 receptor. Thereby, triggers CXCR4 endocytosis and desensitization, negatively regulating the CXCL12/CXCR4 signaling pathway. The chain is Endosomal transmembrane epsin interactor 1 from Homo sapiens (Human).